A 387-amino-acid chain; its full sequence is Gamma-butyrobetaine dioxygenase (387 aa).

Residues Cys-38, Cys-40, Cys-43, and His-82 each contribute to the Zn(2+) site. Fe cation contacts are provided by His-202, Asp-204, and His-347. Position 351 is a phosphoserine (Ser-351).

Belongs to the gamma-BBH/TMLD family. Fe(2+) is required as a cofactor. The cofactor is L-ascorbate.

The protein resides in the cytoplasm. It carries out the reaction 4-(trimethylamino)butanoate + 2-oxoglutarate + O2 = carnitine + succinate + CO2. It functions in the pathway amine and polyamine biosynthesis; carnitine biosynthesis. Functionally, catalyzes the formation of L-carnitine from gamma-butyrobetaine. This Pongo abelii (Sumatran orangutan) protein is Gamma-butyrobetaine dioxygenase (BBOX1).